The following is a 342-amino-acid chain: UDP-N-acetylglucosamine--N-acetylmuramyl-(pentapeptide) pyrophosphoryl-undecaprenol N-acetylglucosamine transferase (342 aa).

Residues 10–12 (TGG), Asn124, Ser177, and Gln275 contribute to the UDP-N-acetyl-alpha-D-glucosamine site.

This sequence belongs to the glycosyltransferase 28 family. MurG subfamily.

It is found in the cell inner membrane. It carries out the reaction di-trans,octa-cis-undecaprenyl diphospho-N-acetyl-alpha-D-muramoyl-L-alanyl-D-glutamyl-meso-2,6-diaminopimeloyl-D-alanyl-D-alanine + UDP-N-acetyl-alpha-D-glucosamine = di-trans,octa-cis-undecaprenyl diphospho-[N-acetyl-alpha-D-glucosaminyl-(1-&gt;4)]-N-acetyl-alpha-D-muramoyl-L-alanyl-D-glutamyl-meso-2,6-diaminopimeloyl-D-alanyl-D-alanine + UDP + H(+). The protein operates within cell wall biogenesis; peptidoglycan biosynthesis. Its function is as follows. Cell wall formation. Catalyzes the transfer of a GlcNAc subunit on undecaprenyl-pyrophosphoryl-MurNAc-pentapeptide (lipid intermediate I) to form undecaprenyl-pyrophosphoryl-MurNAc-(pentapeptide)GlcNAc (lipid intermediate II). This Campylobacter jejuni subsp. jejuni serotype O:2 (strain ATCC 700819 / NCTC 11168) protein is UDP-N-acetylglucosamine--N-acetylmuramyl-(pentapeptide) pyrophosphoryl-undecaprenol N-acetylglucosamine transferase.